A 335-amino-acid chain; its full sequence is Protein BIG1 (335 aa).

The signal sequence occupies residues 1–17; the sequence is MQTVLKYLLLIMCGSFC. The Lumenal segment spans residues 20 to 275; it reads EELQNQTNVP…FDSQLIENNR (256 aa). N-linked (GlcNAc...) asparagine glycans are attached at residues asparagine 24 and asparagine 144. Residues 276-296 form a helical membrane-spanning segment; the sequence is GLLQLIFTILVGYILIQFFFT. Residues 297–335 are Cytoplasmic-facing; that stretch reads KKTIVDEKITNKKDNVKQTSPQLLKKVQEIQKKPSQQVS.

Belongs to the BIG1 family. N-glycosylated.

Its subcellular location is the endoplasmic reticulum membrane. Required for normal beta-1,6-glucan synthesis. In Saccharomyces cerevisiae (strain ATCC 204508 / S288c) (Baker's yeast), this protein is Protein BIG1 (BIG1).